A 445-amino-acid polypeptide reads, in one-letter code: Dihydroorotate dehydrogenase (quinone), mitochondrial (445 aa).

A mitochondrion-targeting transit peptide spans 1–16 (MNSGFPRILSKKLFTL). A helical transmembrane segment spans residues 39–56 (LLKYTVGIAIGSFAGFYF). Residues 124 to 128 (AGLDK) and Ser148 each bind FMN. Lys128 contributes to the substrate binding site. 173 to 177 (NRYGF) is a substrate binding site. Residues Asn221 and Asn251 each coordinate FMN. 251–256 (NVSSPN) provides a ligand contact to substrate. Ser254 serves as the catalytic Nucleophile. 2 residues coordinate FMN: Lys302 and Ser330. A substrate-binding site is contributed by 331 to 332 (NT). FMN-binding positions include Gly356, Gly386, and 407-408 (YT).

It belongs to the dihydroorotate dehydrogenase family. Type 2 subfamily. FMN is required as a cofactor.

The protein localises to the mitochondrion inner membrane. It catalyses the reaction (S)-dihydroorotate + a quinone = orotate + a quinol. The protein operates within pyrimidine metabolism; UMP biosynthesis via de novo pathway; orotate from (S)-dihydroorotate (quinone route): step 1/1. Functionally, catalyzes the conversion of dihydroorotate to orotate with quinone as electron acceptor. This chain is Dihydroorotate dehydrogenase (quinone), mitochondrial (URA9), found in Kluyveromyces lactis (strain ATCC 8585 / CBS 2359 / DSM 70799 / NBRC 1267 / NRRL Y-1140 / WM37) (Yeast).